A 359-amino-acid polypeptide reads, in one-letter code: Phospho-N-acetylmuramoyl-pentapeptide-transferase (359 aa).

The next 10 helical transmembrane spans lie at 3–23, 55–75, 84–104, 117–137, 156–176, 187–207, 231–251, 255–275, 280–300, and 334–354; these read QIIIAAGIAILVSIMLTPVLI, VAILAGMWAGYFGSHLVGIAF, GLLVLALATMLGGVGFIDDFI, TSKTVGQILSALVFGVLVLQF, IATVAMPAAIFVLFCVILVMS, LDGLAGGCMAMVTGAYVIVTF, LAVIAAATAGACIGFLWWNAA, IFMGDTGSLALGGVIAGLSVT, LLAVVLGALFVAEIVSVVLQI, and FWLLTAIACGLGLALFYGEWL.

This sequence belongs to the glycosyltransferase 4 family. MraY subfamily. Requires Mg(2+) as cofactor.

The protein localises to the cell membrane. It catalyses the reaction UDP-N-acetyl-alpha-D-muramoyl-L-alanyl-gamma-D-glutamyl-meso-2,6-diaminopimeloyl-D-alanyl-D-alanine + di-trans,octa-cis-undecaprenyl phosphate = di-trans,octa-cis-undecaprenyl diphospho-N-acetyl-alpha-D-muramoyl-L-alanyl-D-glutamyl-meso-2,6-diaminopimeloyl-D-alanyl-D-alanine + UMP. It participates in cell wall biogenesis; peptidoglycan biosynthesis. Functionally, catalyzes the initial step of the lipid cycle reactions in the biosynthesis of the cell wall peptidoglycan: transfers peptidoglycan precursor phospho-MurNAc-pentapeptide from UDP-MurNAc-pentapeptide onto the lipid carrier undecaprenyl phosphate, yielding undecaprenyl-pyrophosphoryl-MurNAc-pentapeptide, known as lipid I. The chain is Phospho-N-acetylmuramoyl-pentapeptide-transferase from Mycobacteroides abscessus (strain ATCC 19977 / DSM 44196 / CCUG 20993 / CIP 104536 / JCM 13569 / NCTC 13031 / TMC 1543 / L948) (Mycobacterium abscessus).